Consider the following 849-residue polypeptide: Envelope glycoprotein gp160 (849 aa).

A signal peptide spans 1–31; that stretch reads MRVKGIQRNWQHLWKWGTLILGLVIICSASD. At 32-670 the chain is on the extracellular side; that stretch reads NLWVTVYYGV…ISNWLWYIRI (639 aa). The cysteines at positions 53 and 73 are disulfide-linked. 17 N-linked (GlcNAc...) asparagine; by host glycosylation sites follow: Asn87, Asn129, Asn137, Asn142, Asn153, Asn185, Asn195, Asn232, Asn239, Asn260, Asn274, Asn287, Asn299, Asn329, Asn341, Asn354, and Asn358. 5 disulfides stabilise this stretch: Cys118–Cys203, Cys125–Cys194, Cys130–Cys154, Cys216–Cys245, and Cys226–Cys237. Residues 130–153 form a V1 region; that stretch reads CTNVNSANHTEANNTVENKEEIKN. Residues 154-194 are V2; sequence CSFKITTERGGKKKEEYALFYKLDVVPISNGNKTSYRLIHC. The tract at residues 294–327 is V3; the sequence is CIRPNNNTRKSIPIGPGQAFYATGDIIGDIRQAH. Cys294 and Cys328 are oxidised to a cystine. The tract at residues 360–370 is CD4-binding loop; sequence SAGGDLEITTH. 2 disulfide bridges follow: Cys374-Cys430 and Cys381-Cys403. Residues 381–403 are V4; the sequence is CNTSGLFNNNISNINNETITLPC. Residues Asn382, Asn390, Asn396, Asn433, and Asn447 are each glycosylated (N-linked (GlcNAc...) asparagine; by host). 2 V5 regions span residues 446-457 and 448-457; these read NNDSTEETFRPG and DSTEETFRPG. The fusion peptide stretch occupies residues 498-518; sequence AVGLGAVFLGFLGAAGSTMGA. The tract at residues 560–578 is immunosuppression; that stretch reads KQLQSRVLAIERYLKDQQL. An intrachain disulfide couples Cys584 to Cys590. 4 N-linked (GlcNAc...) asparagine; by host glycosylation sites follow: Asn597, Asn602, Asn611, and Asn623. Residues 619–653 are a coiled coil; it reads REIHNYTQHIYSLIEESQNQQEKNEQDLLALDKWA. An MPER; binding to GalCer region spans residues 648 to 669; that stretch reads ALDKWASLWNWFDISNWLWYIR. A helical transmembrane segment spans residues 671-691; it reads FIMIVGGLIGLRIVFAVLSIV. At 692–849 the chain is on the cytoplasmic side; that stretch reads NRVRQGYSPL…IRQGLERALL (158 aa). The YXXL motif; contains endocytosis signal motif lies at 698–701; that stretch reads YSPL. Positions 709-729 are disordered; that stretch reads HQREPDRLGKTEEGGGEQDRD. Residue Cys750 is the site of S-palmitoyl cysteine; by host attachment. Residues 848 to 849 carry the Di-leucine internalization motif motif; that stretch reads LL.

This sequence belongs to the HIV-1 env protein family. The mature envelope protein (Env) consists of a homotrimer of non-covalently associated gp120-gp41 heterodimers. The resulting complex protrudes from the virus surface as a spike. There seems to be as few as 10 spikes on the average virion. Interacts with host CD4, CCR5 and CXCR4. Gp120 also interacts with the C-type lectins CD209/DC-SIGN and CLEC4M/DC-SIGNR (collectively referred to as DC-SIGN(R)). Gp120 and gp41 interact with GalCer. Gp120 interacts with host ITGA4/ITGB7 complex; on CD4+ T-cells, this interaction results in rapid activation of integrin ITGAL/LFA-1, which facilitates efficient cell-to-cell spreading of HIV-1. Gp120 interacts with cell-associated heparan sulfate; this interaction increases virus infectivity on permissive cells and may be involved in infection of CD4- cells. As to quaternary structure, the mature envelope protein (Env) consists of a homotrimer of non-covalently associated gp120-gp41 heterodimers. The resulting complex protrudes from the virus surface as a spike. There seems to be as few as 10 spikes on the average virion. Highly glycosylated by host. The high number of glycan on the protein is reffered to as 'glycan shield' because it contributes to hide protein sequence from adaptive immune system. In terms of processing, palmitoylation of the transmembrane protein and of Env polyprotein (prior to its proteolytic cleavage) is essential for their association with host cell membrane lipid rafts. Palmitoylation is therefore required for envelope trafficking to classical lipid rafts, but not for viral replication. Post-translationally, specific enzymatic cleavages in vivo yield mature proteins. Envelope glycoproteins are synthesized as an inactive precursor that is heavily N-glycosylated and processed likely by host cell furin in the Golgi to yield the mature SU and TM proteins. The cleavage site between SU and TM requires the minimal sequence [KR]-X-[KR]-R. About 2 of the 9 disulfide bonds of gp41 are reduced by P4HB/PDI, following binding to CD4 receptor.

It is found in the virion membrane. It localises to the host cell membrane. The protein resides in the host endosome membrane. Functionally, oligomerizes in the host endoplasmic reticulum into predominantly trimers. In a second time, gp160 transits in the host Golgi, where glycosylation is completed. The precursor is then proteolytically cleaved in the trans-Golgi and thereby activated by cellular furin or furin-like proteases to produce gp120 and gp41. Attaches the virus to the host lymphoid cell by binding to the primary receptor CD4. This interaction induces a structural rearrangement creating a high affinity binding site for a chemokine coreceptor like CXCR4 and/or CCR5. Acts as a ligand for CD209/DC-SIGN and CLEC4M/DC-SIGNR, which are respectively found on dendritic cells (DCs), and on endothelial cells of liver sinusoids and lymph node sinuses. These interactions allow capture of viral particles at mucosal surfaces by these cells and subsequent transmission to permissive cells. HIV subverts the migration properties of dendritic cells to gain access to CD4+ T-cells in lymph nodes. Virus transmission to permissive T-cells occurs either in trans (without DCs infection, through viral capture and transmission), or in cis (following DCs productive infection, through the usual CD4-gp120 interaction), thereby inducing a robust infection. In trans infection, bound virions remain infectious over days and it is proposed that they are not degraded, but protected in non-lysosomal acidic organelles within the DCs close to the cell membrane thus contributing to the viral infectious potential during DCs' migration from the periphery to the lymphoid tissues. On arrival at lymphoid tissues, intact virions recycle back to DCs' cell surface allowing virus transmission to CD4+ T-cells. In terms of biological role, acts as a class I viral fusion protein. Under the current model, the protein has at least 3 conformational states: pre-fusion native state, pre-hairpin intermediate state, and post-fusion hairpin state. During fusion of viral and target intracellular membranes, the coiled coil regions (heptad repeats) assume a trimer-of-hairpins structure, positioning the fusion peptide in close proximity to the C-terminal region of the ectodomain. The formation of this structure appears to drive apposition and subsequent fusion of viral and target cell membranes. Complete fusion occurs in host cell endosomes and is dynamin-dependent, however some lipid transfer might occur at the plasma membrane. The virus undergoes clathrin-dependent internalization long before endosomal fusion, thus minimizing the surface exposure of conserved viral epitopes during fusion and reducing the efficacy of inhibitors targeting these epitopes. Membranes fusion leads to delivery of the nucleocapsid into the cytoplasm. This is Envelope glycoprotein gp160 from Human immunodeficiency virus type 1 group M subtype G (isolate 92NG083) (HIV-1).